The chain runs to 121 residues: Ribonuclease P protein component (121 aa).

It belongs to the RnpA family. In terms of assembly, consists of a catalytic RNA component (M1 or rnpB) and a protein subunit.

The catalysed reaction is Endonucleolytic cleavage of RNA, removing 5'-extranucleotides from tRNA precursor.. Its function is as follows. RNaseP catalyzes the removal of the 5'-leader sequence from pre-tRNA to produce the mature 5'-terminus. It can also cleave other RNA substrates such as 4.5S RNA. The protein component plays an auxiliary but essential role in vivo by binding to the 5'-leader sequence and broadening the substrate specificity of the ribozyme. The protein is Ribonuclease P protein component of Rickettsia prowazekii (strain Madrid E).